The chain runs to 168 residues: S-ribosylhomocysteine lyase (168 aa).

Fe cation-binding residues include H54, H58, and C128.

Belongs to the LuxS family. Homodimer. Fe cation serves as cofactor.

The catalysed reaction is S-(5-deoxy-D-ribos-5-yl)-L-homocysteine = (S)-4,5-dihydroxypentane-2,3-dione + L-homocysteine. Functionally, involved in the synthesis of autoinducer 2 (AI-2) which is secreted by bacteria and is used to communicate both the cell density and the metabolic potential of the environment. The regulation of gene expression in response to changes in cell density is called quorum sensing. Catalyzes the transformation of S-ribosylhomocysteine (RHC) to homocysteine (HC) and 4,5-dihydroxy-2,3-pentadione (DPD). The chain is S-ribosylhomocysteine lyase from Histophilus somni (strain 2336) (Haemophilus somnus).